The sequence spans 1692 residues: MGQKTIKRKIQSAERPAEADVAFLASTQHSKDLCYEYDAPEEVAVEEPVDETPAPETAPERPPLSRAKTAAVKPQETAAPTTATIADVPLSAEEIVRALVARKLKKPILSIPTSKSVKELCNGKSTLQNEIVGDFHSEFTNLPDRPEDIPLKELVPASQSLMLGRVSSALLSKLVSSKMPARFNADAIGKYLASKWGLGPLRSVAVMLFAIAAEPEARLGSVAAAEKYLDDTAAKYAEWAGITLQERSTQSSAGGGGSSGTVDPTVLAELTKTNTRLAKRQFQALAEYLQVDLMKPSSEQESEALAVELQQKLDAWTAEFSEEFLAGVAPTFSEKKSRRYNAWWNAARQDVLALFSGNLQEDLSRDAAALEAFLDRLSNRAGESLLAMTRSLSRRNQANAIPGLTDIARRAEKAISSCIDRPATAKVHLPATRPRTTVSDEGDIKFNEVPRPDVSGHAAYADVLQAKDLNGHPAAARFVSLKSAHSHTDLTNGMLDRIRTALDSGMSFAGKNILITGAGQGSIGAEVVRILLTGGARVIVTTSREPSSTAKYFQQMYEESGAKGSELILTRFNQASAKDCENLVDHIYDSSGLDRDLDAVLPFAAAPEGGTEIQDVGAKNELVHRLMLASVFRMLGRVIKNKRDRSIDCHPTQVLLPLSPNHGTFGGDGMYAESKLGLESLVNRVQSESWSDELAICGVKIGWTRGTGLMNANDIVAEAIEDHGVLTFSVQEMAFNIAMLMTPELVDLCENAPLMADFGGGLSALEDCAKILSAARTEINTAADVARAVKAEDDLERAASRTLPAPSSTSPVAKKSMLRIGFPRLPDFELELSPLEHLRDIKDPSETVVVVGFSELGPWGSARLRWEIESKGDFSQVGYMEMAWMMDLIKHVDGPTKNGYYVGWVDSKTGESVHDAEIEARYGEVIRKHSGIRFVDPEGSAGYDPSKKEYLHEVAVEEDLPEFEASSATAEAFRLRHGTNVSISPIEGTENCRVQVKRGASIKIPKSVPFTWGSVAGQLPKGWSPKKYGIPEDLIPQLDPVSLYTICCVAEAFYSAGITDPLEIFKYIHLSEIGNFLGSSMGGALKTRQMYRDIYLDKDIQSDVLQETYLNTTGAWVNMLLLGSTGPIKTPMGACATGVESIDSAFESIMSDKTRMCIVGGFDDFHEDESYGFSTMKATVNVEEELAKGRLPSEMSRPTAESRSGFVEAHGCGVQILCRGDVALEMGLPVYGIIAGSTMAADKVGRSVPAPGQGILTFARETGQAQLDKSSPSTNTTSRTSSVSLARRGATVSPLRASLDAWGLTIDDLDVASLHGTSTKANDLNEPEVICKQMDHLGRTPGRPLWAICQKSVTGHPKAPAAAWMLNGCLQVMDSRTIPANRNADNVDPALQTATHLCFPTRPVRVQDVRAFILTSFGFGQKGGQVVGVAPKYFFATLDEEVYKDYSVRVTKRSKTADRAYAKALMSNAIVKVQDHSPYEQEDQSRIFMDPLSRITEDAETGSYHFDTKDIRNVADVKARLTRLVRGERLNARPDAASGLAQAARSAQAWIEKQTGGRSSVDTSTVGIDLVDLSAFSAHENETFIERNFTEQEKAFAKQSLDQKMAFASRWAAKEAVFKCLHTQTKGAGAAMKDIEIVKSDNAPKVKLHNDCIKAGRKAGLEDIQLSISHGEDCLIAVAIGIAGNGPAKYTL.

A disordered region spans residues 44 to 80 (AVEEPVDETPAPETAPERPPLSRAKTAAVKPQETAAP). Residues 90 to 174 (LSAEEIVRAL…RVSSALLSKL (85 aa)) enclose the Carrier domain. S125 carries the O-(pantetheine 4'-phosphoryl)serine modification. The tract at residues 508–746 (FAGKNILITG…IAMLMTPELV (239 aa)) is ketoreductase (KR) domain. The 483-residue stretch at 948–1430 (KEYLHEVAVE…QKGGQVVGVA (483 aa)) folds into the Ketosynthase family 3 (KS3) domain. The For beta-ketoacyl synthase activity role is filled by C1135. Residues 1263–1287 (GQAQLDKSSPSTNTTSRTSSVSLAR) form a disordered region. The span at 1270–1284 (SSPSTNTTSRTSSVS) shows a compositional bias: low complexity. Active-site for beta-ketoacyl synthase activity residues include H1315 and H1356. A Mg(2+)-binding site is contributed by D1569. Acetyl-CoA-binding positions include 1569–1571 (DLV), 1615–1625 (EAVFKCLHTQT), 1639–1642 (KSDN), and 1668–1670 (ISH). S1669 contacts Mg(2+).

This sequence belongs to the thiolase-like superfamily. Fungal fatty acid synthetase subunit alpha family. In terms of assembly, [Alpha(6)beta(6)] hexamers of two multifunctional subunits (alpha and beta). 4'-phosphopantetheine is transferred from CoA to a specific serine of the acyl carrier domain by the C-terminal PPT domain. This modification is essential for activity because fatty acids are bound in thioester linkage to the sulfhydryl of the prosthetic group.

The catalysed reaction is acetyl-CoA + n malonyl-CoA + 2n NADPH + 4n H(+) = a long-chain-acyl-CoA + n CoA + n CO2 + 2n NADP(+).. It carries out the reaction a fatty acyl-[ACP] + malonyl-[ACP] + H(+) = a 3-oxoacyl-[ACP] + holo-[ACP] + CO2. It catalyses the reaction a (3R)-hydroxyacyl-[ACP] + NADP(+) = a 3-oxoacyl-[ACP] + NADPH + H(+). It participates in mycotoxin biosynthesis. Functionally, fatty acid synthase alpha subunit; part of the fragmented gene cluster that mediates the biosynthesis of dothistromin (DOTH), a polyketide toxin very similar in structure to the aflatoxin precursor, versicolorin B. The first step of the pathway is the conversion of acetate to norsolorinic acid (NOR) and requires the fatty acid synthase subunits hexA and hexB, as well as the polyketide synthase pksA. PksA combines a hexanoyl starter unit and 7 malonyl-CoA extender units to synthesize the precursor NOR. The hexanoyl starter unit is provided to the acyl-carrier protein (ACP) domain by the fungal fatty acid synthase hexA/hexB. The second step is the conversion of NOR to averantin (AVN) and requires the norsolorinic acid ketoreductase nor1, which catalyzes the dehydration of norsolorinic acid to form (1'S)-averantin. The cytochrome P450 monooxygenase avnA then catalyzes the hydroxylation of AVN to 5'hydroxyaverantin (HAVN). The next step is performed by adhA that transforms HAVN to averufin (AVF). Averufin might then be converted to hydroxyversicolorone by cypX and avfA. Hydroxyversicolorone is further converted versiconal hemiacetal acetate (VHA) by moxY. VHA is then the substrate for the versiconal hemiacetal acetate esterase est1 to yield versiconal (VAL). Versicolorin B synthase vbsA then converts VAL to versicolorin B (VERB) by closing the bisfuran ring. Then, the activity of the versicolorin B desaturase verB leads to versicolorin A (VERA). DotB, a predicted chloroperoxidase, may perform epoxidation of the A-ring of VERA. Alternatively, a cytochrome P450, such as cypX or avnA could catalyze this step. It is also possible that another, uncharacterized, cytochrome P450 enzyme is responsible for this step. Opening of the epoxide could potentially be achieved by the epoxide hydrolase epoA. However, epoA seems not to be required for DOTH biosynthesis, but other epoxide hydrolases may have the ability to complement this hydrolysis. Alternatively, opening of the epoxide ring could be achieved non-enzymatically. The next step is the deoxygenation of ring A to yield the 5,8-dihydroxyanthraquinone which is most likely catalyzed by the NADPH dehydrogenase encoded by ver1. The last stages of DOTH biosynthesis are proposed to involve hydroxylation of the bisfuran. OrdB and norB might have oxidative roles here. An alternative possibility is that cytochrome P450 monoogenases such as avnA and cypX might perform these steps in addition to previously proposed steps. This Dothistroma septosporum (strain NZE10 / CBS 128990) (Red band needle blight fungus) protein is Fatty acid synthase alpha subunit hexA.